The chain runs to 212 residues: uncharacterized protein (212 aa).

A signal peptide spans 1 to 20; it reads MKNLTIGAIFLIFFAVSAFA.

It is found in the virion. This is an uncharacterized protein from Acanthamoeba polyphaga (Amoeba).